Consider the following 485-residue polypeptide: Homospermidine synthase (485 aa).

Belongs to the saccharopine dehydrogenase family. NAD(+) serves as cofactor.

It catalyses the reaction 2 putrescine = sym-homospermidine + NH4(+). The enzyme catalyses putrescine + spermidine = sym-homospermidine + propane-1,3-diamine. Its function is as follows. Involved in the NAD(+)-dependent synthesis of the polyamine homospermidine from putrescine. The protein is Homospermidine synthase (hss) of Mesorhizobium japonicum (strain LMG 29417 / CECT 9101 / MAFF 303099) (Mesorhizobium loti (strain MAFF 303099)).